Reading from the N-terminus, the 289-residue chain is MIRFLVLSLLILTLFLTTPAVEGDVSFRLSGATSSSYGVFISNLRKALPNERKLYDIPLLRSSLPGSQRYALIHLTNYADETISVAIDVTNVYIMGYRAGDTSYFFNEASATEAAKYVFKDAMRKVTLPYSGNYERLQTAAGKIRENIPLGLPALDSAITTLFYYNANSAASALMVLIQSTSEAARYKFIEQQIGKRVDKTFLPSLAIISLENSWSALSKQIQIASTNNGQFESPVVLINAQNQRVTITNVDAGVVTSNIALLLNRNNMAAMDDDVPMTQSFGCGSYAI.

A signal peptide spans 1–23; it reads MIRFLVLSLLILTLFLTTPAVEG. Glutamate 183 is a catalytic residue. Positions 271–289 are cleaved as a propeptide — removed in mature form; sequence AMDDDVPMTQSFGCGSYAI.

The protein belongs to the ribosome-inactivating protein family. Type 1 RIP subfamily.

The catalysed reaction is Endohydrolysis of the N-glycosidic bond at one specific adenosine on the 28S rRNA.. Inactivates eukaryotic 60S ribosomal subunits. This Trichosanthes kirilowii (Chinese snake gourd) protein is Ribosome-inactivating protein alpha-trichosanthin.